Consider the following 319-residue polypeptide: Thioredoxin reductase (319 aa).

FAD is bound by residues 11–14 (SGPA), 40–41 (IA), Q45, N54, C145, D288, and 295–297 (RQA). C142 and C145 are joined by a disulfide.

It belongs to the class-II pyridine nucleotide-disulfide oxidoreductase family. Homodimer. FAD is required as a cofactor.

The protein resides in the cytoplasm. It carries out the reaction [thioredoxin]-dithiol + NADP(+) = [thioredoxin]-disulfide + NADPH + H(+). The polypeptide is Thioredoxin reductase (TRR1) (Candida glabrata (strain ATCC 2001 / BCRC 20586 / JCM 3761 / NBRC 0622 / NRRL Y-65 / CBS 138) (Yeast)).